The primary structure comprises 1124 residues: Angiopoietin-1 receptor (1124 aa).

The first 22 residues, 1 to 22, serve as a signal peptide directing secretion; the sequence is MDSLASLVLCGVSLLLSGTVEG. Over 23-748 the chain is Extracellular; the sequence is AMDLILINSL…ADLGGGKMLL (726 aa). Cys44 and Cys102 are disulfide-bonded. In terms of domain architecture, Ig-like C2-type 1 spans 44-123; that stretch reads CIASGWRPHE…RTMKMRQQAS (80 aa). N-linked (GlcNAc...) asparagine glycans are attached at residues Asn140 and Asn158. EGF-like domains follow at residues 210–252, 254–299, and 301–341; these read RCEA…RTCE, ACEL…LQCN, and ACHP…LQCE. Intrachain disulfides connect Cys211-Cys220, Cys224-Cys233, Cys227-Cys240, Cys242-Cys251, Cys255-Cys264, Cys268-Cys274, Cys280-Cys287, Cys289-Cys298, Cys302-Cys311, Cys315-Cys323, Cys317-Cys329, Cys331-Cys340, and Cys370-Cys424. The 91-residue stretch at 350–440 folds into the Ig-like C2-type 2 domain; sequence PKIVDLPDHI…GMVEKPFNIS (91 aa). N-linked (GlcNAc...) asparagine glycans are attached at residues Asn399, Asn438, Asn464, Asn560, Asn596, Asn649, and Asn691. Fibronectin type-III domains follow at residues 447–541, 545–636, and 641–735; these read PLNA…TASI, PPRG…TLSD, and QPEN…LPES. A helical membrane pass occupies residues 749–769; it reads IAILGSAGMTCLTVLLAFLII. Topologically, residues 770–1124 are cytoplasmic; sequence LQLKRANVQR…GIDCSAEEAA (355 aa). Positions 824–1096 constitute a Protein kinase domain; it reads IKFQDVIGEG…QILVSLNRML (273 aa). ATP is bound by residues 830 to 838 and Lys855; that span reads IGEGNFGQV. Tyr860 carries the phosphotyrosine; by autocatalysis modification. Residue Asp964 is the Proton acceptor of the active site. Phosphotyrosine; by autocatalysis occurs at positions 992, 1102, and 1108.

It belongs to the protein kinase superfamily. Tyr protein kinase family. Tie subfamily. Homodimer. Heterodimer with TIE1. Interacts with ANGPT1, ANGPT2 and ANGPT4. At cell-cell contacts in quiescent cells, forms a signaling complex composed of ANGPT1 plus TEK molecules from two adjoining cells. In the absence of endothelial cell-cell contacts, interaction with ANGPT1 mediates contacts with the extracellular matrix. Interacts with PTPRB; this promotes endothelial cell-cell adhesion. Interacts with DOK2, GRB2, GRB7, GRB14, PIK3R1 and PTPN11/SHP2. Colocalizes with DOK2 at contacts with the extracellular matrix in migrating cells. Interacts (tyrosine phosphorylated) with TNIP2. Interacts (tyrosine phosphorylated) with SHC1 (via SH2 domain). In terms of processing, proteolytic processing leads to the shedding of the extracellular domain (soluble TIE-2 alias sTIE-2). Autophosphorylated on tyrosine residues in response to ligand binding. Autophosphorylation occurs in trans, i.e. one subunit of the dimeric receptor phosphorylates tyrosine residues on the other subunit. Autophosphorylation occurs in a sequential manner, where Tyr-992 in the kinase activation loop is phosphorylated first, followed by autophosphorylation at Tyr-1108 and at additional tyrosine residues. ANGPT1-induced phosphorylation is impaired during hypoxia, due to increased expression of ANGPT2. Phosphorylation is important for interaction with GRB14, PIK3R1 and PTPN11. Phosphorylation at Tyr-1102 is important for interaction with SHC1, GRB2 and GRB7. Phosphorylation at Tyr-1108 is important for interaction with DOK2 and for coupling to downstream signal transduction pathways in endothelial cells. Dephosphorylated by PTPRB. Post-translationally, ubiquitinated. The phosphorylated receptor is ubiquitinated and internalized, leading to its degradation. Detected in umbilical vein endothelial cells. Proteolytic processing gives rise to a soluble extracellular domain that is detected in blood plasma (at protein level). Predominantly expressed in endothelial cells and their progenitors, the angioblasts. Has been directly found in placenta and lung, with a lower level in umbilical vein endothelial cells, brain and kidney.

The protein resides in the cell membrane. It localises to the cell junction. The protein localises to the focal adhesion. It is found in the cytoplasm. Its subcellular location is the cytoskeleton. The protein resides in the secreted. The enzyme catalyses L-tyrosyl-[protein] + ATP = O-phospho-L-tyrosyl-[protein] + ADP + H(+). Its activity is regulated as follows. Angiopoietin binding leads to receptor dimerization and activation by autophosphorylation at Tyr-992 on the kinase activation loop. Inhibited by staurosporine, K252a, PP2, damnacanthal, SB203580, CEP-11207, CEP-11981 and CE-245677. Inhibited by triazine, thienopyrimidine and thiazolopyrimidine derivatives. In terms of biological role, tyrosine-protein kinase that acts as a cell-surface receptor for ANGPT1, ANGPT2 and ANGPT4 and regulates angiogenesis, endothelial cell survival, proliferation, migration, adhesion and cell spreading, reorganization of the actin cytoskeleton, but also maintenance of vascular quiescence. Has anti-inflammatory effects by preventing the leakage of pro-inflammatory plasma proteins and leukocytes from blood vessels. Required for normal angiogenesis and heart development during embryogenesis. Required for post-natal hematopoiesis. After birth, activates or inhibits angiogenesis, depending on the context. Inhibits angiogenesis and promotes vascular stability in quiescent vessels, where endothelial cells have tight contacts. In quiescent vessels, ANGPT1 oligomers recruit TEK to cell-cell contacts, forming complexes with TEK molecules from adjoining cells, and this leads to preferential activation of phosphatidylinositol 3-kinase and the AKT1 signaling cascades. In migrating endothelial cells that lack cell-cell adhesions, ANGT1 recruits TEK to contacts with the extracellular matrix, leading to the formation of focal adhesion complexes, activation of PTK2/FAK and of the downstream kinases MAPK1/ERK2 and MAPK3/ERK1, and ultimately to the stimulation of sprouting angiogenesis. ANGPT1 signaling triggers receptor dimerization and autophosphorylation at specific tyrosine residues that then serve as binding sites for scaffold proteins and effectors. Signaling is modulated by ANGPT2 that has lower affinity for TEK, can promote TEK autophosphorylation in the absence of ANGPT1, but inhibits ANGPT1-mediated signaling by competing for the same binding site. Signaling is also modulated by formation of heterodimers with TIE1, and by proteolytic processing that gives rise to a soluble TEK extracellular domain. The soluble extracellular domain modulates signaling by functioning as decoy receptor for angiopoietins. TEK phosphorylates DOK2, GRB7, GRB14, PIK3R1; SHC1 and TIE1. This Homo sapiens (Human) protein is Angiopoietin-1 receptor.